The chain runs to 268 residues: MMQRCLRLPKPLALRRGLHVAQVNGQAVATEAPEAEPQDAFERQYLKERIEISPFQRVFLGAGSSIAALLDPRRHDMIACLGETTGEDALLTILDTMQASEEGQRIMADKPRIHTSTIDFKYLETLPPDTFGAAYVKFLKDNQVTPDSRMAVRFLEDPKLAYLMTRYRECHDLIHTVLDMPTNMLGEVAVKWVEALNTGLPMCYGGAVFGAVRLRPKQRRAYLKHYLPWALENGKRSKPLMPVYWEKRWEQNIHELRSELGITVLNKA.

Residues histidine 171, aspartate 172, histidine 175, and glutamate 187 each coordinate Zn(2+).

Belongs to the COQ4 family. As to quaternary structure, component of a multi-subunit COQ enzyme complex. Zn(2+) serves as cofactor.

Its subcellular location is the mitochondrion inner membrane. It carries out the reaction a 4-hydroxy-3-methoxy-5-(all-trans-polyprenyl)benzoate + H(+) = a 2-methoxy-6-(all-trans-polyprenyl)phenol + CO2. It participates in cofactor biosynthesis; ubiquinone biosynthesis. Functionally, lyase that catalyzes the C1-decarboxylation of 4-hydroxy-3-methoxy-5-(all-trans-polyprenyl)benzoic acid into 2-methoxy-6-(all-trans-polyprenyl)phenol during ubiquinone biosynthesis. This chain is Ubiquinone biosynthesis protein COQ4 homolog, mitochondrial, found in Drosophila yakuba (Fruit fly).